Reading from the N-terminus, the 704-residue chain is mRNA (2'-O-methyladenosine-N(6)-)-methyltransferase (704 aa).

Positions 1-33 are disordered; sequence MANENHGSPREEASLLSHSPGTSNQSQPCSPKP. Polar residues predominate over residues 16–29; sequence LSHSPGTSNQSQPC. The residue at position 30 (S30) is a Phosphoserine. Positions 43-77 constitute a WW domain; it reads ELVHAGWEKCWSRRENRPYYFNRFTNQSLWEMPVL. Positions 88 to 151 are disordered; it reads GLNATPLPQD…PSSPSIPGTP (64 aa). The Nuclear localization signal signature appears at 109–113; the sequence is KPRKR. S116 carries the post-translational modification Phosphoserine. Residues 136-149 are compositionally biased toward polar residues; that stretch reads PTGQSVPSSPSIPG. T152 carries the post-translational modification Phosphothreonine. Substrate contacts are provided by R235 and R265. Residue 553–556 coordinates S-adenosyl-L-methionine; the sequence is NPPF. Residues E558 and 588 to 592 each bind substrate; that span reads WREPP. 614–616 is an S-adenosyl-L-methionine binding site; it reads FEH. Residues 663–704 are disordered; the sequence is LSAAYRQSGRSHSSGSSSSSSSEAKDRDSGREQGPSREPHPT. The Nuclear localization signal motif lies at 669-684; the sequence is QSGRSHSSGSSSSSSS. Over residues 670 to 684 the composition is skewed to low complexity; that stretch reads SGRSHSSGSSSSSSS. The span at 685–704 shows a compositional bias: basic and acidic residues; the sequence is EAKDRDSGREQGPSREPHPT.

This sequence belongs to the CAPAM family. As to quaternary structure, interacts with POLR2A; interacts with the phosphorylated C-terminal domain (CTD) of POLR2A. Ubiquitous.

The protein localises to the nucleus. It catalyses the reaction a 5'-end (N(7)-methyl 5'-triphosphoguanosine)-(2'-O-methyladenosine) in mRNA + S-adenosyl-L-methionine = a 5'-end (N(7)-methyl 5'-triphosphoguanosine)-(N(6),2'-O-dimethyladenosine) in mRNA + S-adenosyl-L-homocysteine + H(+). With respect to regulation, cap-specific adenosine methyltransferase activity is inhibited by zinc. Cap-specific adenosine methyltransferase that catalyzes formation of N(6),2'-O-dimethyladenosine cap (m6A(m)) by methylating the adenosine at the second transcribed position of capped mRNAs. Recruited to the early elongation complex of RNA polymerase II (RNAPII) via interaction with POLR2A and mediates formation of m6A(m) co-transcriptionally. The chain is mRNA (2'-O-methyladenosine-N(6)-)-methyltransferase from Homo sapiens (Human).